Here is a 224-residue protein sequence, read N- to C-terminus: RNA-binding protein 24-B (224 aa).

An RRM domain is found at 11-88 (TKIFVGGLPY…RKANVNLAYL (78 aa)).

It is found in the nucleus. Its subcellular location is the cytoplasm. Multifunctional RNA-binding protein involved in the regulation of pre-mRNA splicing, mRNA stability and mRNA translation important for cell fate decision and differentiation. Plays a major role in pre-mRNA alternative splicing regulation. Mediates preferentially muscle-specific exon inclusion in numerous mRNAs important for striated cardiac and skeletal muscle cell differentiation. Binds to intronic splicing enhancer (ISE) composed of stretches of GU-rich motifs localized in flanking intron of exon that will be included by alternative splicing. Involved in embryonic stem cell (ESC) transition to cardiac cell differentiation by promoting pre-mRNA alternative splicing events of several pluripotency and/or differentiation genes. Plays a role in the regulation of mRNA stability and mRNA translation to which it is bound. Involved in myogenic differentiation by regulating myog levels. Binds to a huge amount of mRNAs. Required for embryonic heart development, sarcomer and M-band formation in striated muscles. This is RNA-binding protein 24-B (rbm24-b) from Xenopus laevis (African clawed frog).